The chain runs to 399 residues: Serine/threonine-protein kinase PknL (399 aa).

The Cytoplasmic portion of the chain corresponds to 1–368 (MVEAGTRDPL…FIWARQHARR (368 aa)). Residues 19–278 (YLVQAKIASG…IAMGADLEAI (260 aa)) form the Protein kinase domain. ATP contacts are provided by residues 25–33 (IASGGTSTV) and Lys48. Catalysis depends on Asp142, which acts as the Proton acceptor. The segment at 312–346 (GQLGAKPVHHPTRQLTRQPGDCSEPASGSEPEHEP) is disordered. The chain crosses the membrane as a helical span at residues 369-389 (MVLVWVSVVLAITGLVASAAW). The Extracellular segment spans residues 390 to 399 (TIGSNLSGLL).

Belongs to the protein kinase superfamily. Ser/Thr protein kinase family. Post-translationally, autophosphorylated.

Its subcellular location is the cell membrane. The catalysed reaction is L-seryl-[protein] + ATP = O-phospho-L-seryl-[protein] + ADP + H(+). It catalyses the reaction L-threonyl-[protein] + ATP = O-phospho-L-threonyl-[protein] + ADP + H(+). This is Serine/threonine-protein kinase PknL (pknL) from Mycobacterium bovis (strain ATCC BAA-935 / AF2122/97).